Here is a 270-residue protein sequence, read N- to C-terminus: Putative carbamate hydrolase RutD (270 aa).

It belongs to the AB hydrolase superfamily. Hydrolase RutD family.

It carries out the reaction carbamate + 2 H(+) = NH4(+) + CO2. Its function is as follows. Involved in pyrimidine catabolism. May facilitate the hydrolysis of carbamate, a reaction that can also occur spontaneously. This Escherichia coli O44:H18 (strain 042 / EAEC) protein is Putative carbamate hydrolase RutD.